The primary structure comprises 129 residues: Fluoride-specific ion channel FluC 2 (129 aa).

Transmembrane regions (helical) follow at residues 4-24 (LDVM…WWIG), 39-59 (TFLI…LFGV), 65-85 (YGTM…TTFS), and 104-124 (VFYL…GAML). Residues Gly79 and Thr82 each coordinate Na(+).

The protein belongs to the fluoride channel Fluc/FEX (TC 1.A.43) family.

It is found in the cell inner membrane. It catalyses the reaction fluoride(in) = fluoride(out). With respect to regulation, na(+) is not transported, but it plays an essential structural role and its presence is essential for fluoride channel function. In terms of biological role, fluoride-specific ion channel. Important for reducing fluoride concentration in the cell, thus reducing its toxicity. This chain is Fluoride-specific ion channel FluC 2, found in Brucella abortus biovar 1 (strain 9-941).